The chain runs to 588 residues: A-type ATP synthase subunit A 3 (588 aa).

Glycine 234–threonine 241 is a binding site for ATP.

This sequence belongs to the ATPase alpha/beta chains family. As to quaternary structure, has multiple subunits with at least A(3), B(3), C, D, E, F, H, I and proteolipid K(x).

Its subcellular location is the cell membrane. It carries out the reaction ATP + H2O + 4 H(+)(in) = ADP + phosphate + 5 H(+)(out). In terms of biological role, component of the A-type ATP synthase that produces ATP from ADP in the presence of a proton gradient across the membrane. The A chain is the catalytic subunit. This chain is A-type ATP synthase subunit A 3, found in Methanospirillum hungatei JF-1 (strain ATCC 27890 / DSM 864 / NBRC 100397 / JF-1).